A 440-amino-acid polypeptide reads, in one-letter code: Platelet-activating factor acetylhydrolase (440 aa).

The N-terminal stretch at methionine 1–proline 21 is a signal peptide. N-linked (GlcNAc...) asparagine glycans are attached at residues asparagine 59, asparagine 75, and asparagine 199. Serine 272 (nucleophile) is an active-site residue. Active-site charge relay system residues include aspartate 295 and histidine 350.

The protein belongs to the AB hydrolase superfamily. Lipase family. Post-translationally, N-glycosylated. As to expression, plasma.

The protein resides in the secreted. The protein localises to the extracellular space. The catalysed reaction is a 1-O-alkyl-2-acetyl-sn-glycero-3-phosphocholine + H2O = a 1-O-alkyl-sn-glycero-3-phosphocholine + acetate + H(+). It carries out the reaction 1-O-decyl-2-acetyl-sn-glycero-3-phosphocholine + H2O = 1-O-decyl-sn-glycero-3-phosphocholine + acetate + H(+). It catalyses the reaction 1-O-dodecyl-2-acetyl-sn-glycero-3-phosphocholine + H2O = 1-O-dodecyl-sn-glycero-3-phosphocholine + acetate + H(+). The enzyme catalyses 1-O-tetradecyl-2-acetyl-sn-glycero-3-phosphocholine + H2O = 1-O-tetradecyl-sn-glycero-3-phosphocholine + acetate + H(+). The catalysed reaction is 1-O-hexadecyl-2-acetyl-sn-glycero-3-phosphocholine + H2O = 1-O-hexadecyl-sn-glycero-3-phosphocholine + acetate + H(+). It carries out the reaction 1-O-octadecyl-2-acetyl-sn-glycero-3-phosphocholine + H2O = 1-O-octadecyl-sn-glycero-3-phosphocholine + acetate + H(+). It catalyses the reaction 1-hexadecanoyl-2-acetyl-sn-glycero-3-phosphocholine + H2O = 1-hexadecanoyl-sn-glycero-3-phosphocholine + acetate + H(+). The enzyme catalyses 1-hexadecanoyl-2-propionyl-sn-glycero-3-phosphocholine + H2O = propanoate + 1-hexadecanoyl-sn-glycero-3-phosphocholine + H(+). The catalysed reaction is 1-hexadecanoyl-2-butanoyl-sn-glycero-3-phosphocholine + H2O = butanoate + 1-hexadecanoyl-sn-glycero-3-phosphocholine + H(+). It carries out the reaction 1-hexadecanoyl-2-pentanoyl-sn-glycero-3-phosphocholine + H2O = pentanoate + 1-hexadecanoyl-sn-glycero-3-phosphocholine + H(+). It catalyses the reaction 1-hexadecanoyl-2-glutaroyl-sn-glycero-3-phosphocholine + H2O = glutarate + 1-hexadecanoyl-sn-glycero-3-phosphocholine + H(+). The enzyme catalyses 1-hexadecanoyl-2-(5-oxopentanoyl)-sn-glycero-3-phosphocholine + H2O = 5-oxopentanoate + 1-hexadecanoyl-sn-glycero-3-phosphocholine + H(+). The catalysed reaction is 1-hexadecanoyl-2-(9-oxononanoyl)-sn-glycero-3-phosphocholine + H2O = 9-oxononanoate + 1-hexadecanoyl-sn-glycero-3-phosphocholine + H(+). It carries out the reaction 1-hexadecanoyl-2-[9-hydroperoxy-(10E-octadecenoyl)]-sn-glycero-3-phosphocholine + H2O = 9-hydroperoxy-10E-octadecenoate + 1-hexadecanoyl-sn-glycero-3-phosphocholine + H(+). It catalyses the reaction 1-hexadecanoyl-2-(10-hydroperoxy-8E-octadecenoyl)-sn-glycero-3-phosphocholine + H2O = 10-hydroperoxy-(8E)-octadecenoate + 1-hexadecanoyl-sn-glycero-3-phosphocholine + H(+). Lipoprotein-associated calcium-independent phospholipase A2 involved in phospholipid catabolism during inflammatory and oxidative stress response. At the lipid-aqueous interface, hydrolyzes the ester bond of fatty acyl group attached at sn-2 position of phospholipids (phospholipase A2 activity). Specifically targets phospholipids with a short-chain fatty acyl group at sn-2 position. Can hydrolyze phospholipids with long fatty acyl chains, only if they carry oxidized functional groups. Hydrolyzes and inactivates platelet-activating factor (PAF, 1-O-alkyl-2-acetyl-sn-glycero-3-phosphocholine), a potent pro-inflammatory signaling lipid that acts through PTAFR on various innate immune cells. Hydrolyzes oxidatively truncated phospholipids carrying an aldehyde group at omega position, preventing their accumulation in lipoprotein particles and uncontrolled pro-inflammatory effects. As part of high-density lipoprotein (HDL) particles, can hydrolyze phospholipids having long-chain fatty acyl hydroperoxides at sn-2 position and protect against potential accumulation of these oxylipins in the vascular wall. Catalyzes the release from membrane phospholipids of F2-isoprostanes, lipid biomarkers of cellular oxidative damage. This chain is Platelet-activating factor acetylhydrolase (Pla2g7), found in Mus musculus (Mouse).